A 40-amino-acid polypeptide reads, in one-letter code: RNA replication protein (40 aa).

The protein belongs to the potexviruses/carlaviruses RNA replication protein family.

It catalyses the reaction RNA(n) + a ribonucleoside 5'-triphosphate = RNA(n+1) + diphosphate. It carries out the reaction ATP + H2O = ADP + phosphate + H(+). RNA replication. The central part of this protein possibly functions as an ATP-binding helicase. The protein is RNA replication protein of Lily symptomless virus (LSV).